Consider the following 202-residue polypeptide: Pyridoxal 5'-phosphate synthase subunit PdxT (202 aa).

52-54 (GES) contacts L-glutamine. Cys-84 acts as the Nucleophile in catalysis. L-glutamine contacts are provided by residues Arg-120 and 148–149 (IR). Catalysis depends on charge relay system residues His-185 and Glu-187.

It belongs to the glutaminase PdxT/SNO family. In terms of assembly, in the presence of PdxS, forms a dodecamer of heterodimers. Only shows activity in the heterodimer.

The catalysed reaction is aldehydo-D-ribose 5-phosphate + D-glyceraldehyde 3-phosphate + L-glutamine = pyridoxal 5'-phosphate + L-glutamate + phosphate + 3 H2O + H(+). It catalyses the reaction L-glutamine + H2O = L-glutamate + NH4(+). It participates in cofactor biosynthesis; pyridoxal 5'-phosphate biosynthesis. Functionally, catalyzes the hydrolysis of glutamine to glutamate and ammonia as part of the biosynthesis of pyridoxal 5'-phosphate. The resulting ammonia molecule is channeled to the active site of PdxS. The chain is Pyridoxal 5'-phosphate synthase subunit PdxT from Methanopyrus kandleri (strain AV19 / DSM 6324 / JCM 9639 / NBRC 100938).